A 1035-amino-acid polypeptide reads, in one-letter code: MSGSYPFIDIAALDSVREGFARGDAQLVLAHDLSTVLWVNGPGAKLFGYNRVEDLIEGQLDLPVATRRQIAAFSSENTSAPSAVAVRLGGGLRSELTHLHVSNIKLPDGVAALLVATQMPDNSAEAAISGLGDDSTHIALVDAVGKVVAASPRFALLDISASTLEDLIVEAGDATDRIVKRRIRTGSHSVPGAIARLTDTPALHLLCIVGDAPAQFQTAAEAVPLPDNAEAVLEEILPEQGDAPAQQAQKTHAEQPRPKTFAFDHDAPPARFIWKVGPDGTFSEISPDLAAVVGPNSADIVGRRFSDVANVFGFDTDGSIAALLLERDTWSGKRLLWPVEGTRLRVPVELAALPVYSRDREFLGFRGFGIVRPAEAEADPEEIGLALAGGIPQNRKPRKEPAETARMVGEDDVLALSEEVANDDHPAAVLPKPPLDITPTPGRRDSDKVISLLNSCAQEKVAANQAKFLKEKERATRPEGGLTKTERNAFREIAERLRKQGLANTRAESETPVSETSSIEPVEPTPPVKTRSEPIQPDETALLANLPVPVIIHSGDAIHYVNQALLDITGYESLDDIRSAGGVDVLFNSESDDGETRQSMVLRHADGSEEPVDAHLNAIAWRGGRALMLSLMPVTAADLPAPAELPAANDEEKQALEAHVEELKTILDTATDGVVLIDPEGRIRSMNHSASALFGYERDEAEGKFFSMLFAIESQRAAMDYLHGLSGNGVLSVLNDGREVIGREAKGGFIPLFMTIGKLPHTRGFCAVLRDITQWKRTEEELTNARKEAERASNQKTEFLARISHEIRTPLNAIIGFSELMADEKFGPIGNDRYRDYLRDINRSGNHVLALVNDLLDISKIEAGALDMQFEAVSLNDAIGEAIALMQPQANRERVIIRSSFQSNLPDIVADSRSIKQVALNLLSNAVRFTAPGGQVIVSTSYELNGDVVMRVRDTGIGMSKSEVEQALKPFRQINALERRKAESAKDWRNEGTGLGLPLTKAMVEANRAQFAIDSNPGQGTVVEIVFPPTRVLAD.

The tract at residues 1 to 613 (MSGSYPFIDI…HADGSEEPVD (613 aa)) is important for polar localization. The disordered stretch occupies residues 500–533 (QGLANTRAESETPVSETSSIEPVEPTPPVKTRSE). Residues 614 to 1035 (AHLNAIAWRG…VFPPTRVLAD (422 aa)) are interaction with DivK. The region spanning 659-730 (HVEELKTILD…YLHGLSGNGV (72 aa)) is the PAS domain. The Histidine kinase domain occupies 802-1031 (RISHEIRTPL…VVEIVFPPTR (230 aa)). Histidine 805 is modified (phosphohistidine; by autocatalysis).

Interacts with DivK.

The protein resides in the cytoplasm. The enzyme catalyses ATP + protein L-histidine = ADP + protein N-phospho-L-histidine.. Its function is as follows. Functions as a polar differentiation marker. Essential protein that, by localizing in the old pole of dividing cells, controls cell division and maturation, probably through control of DivK phosphorylation status and cellular distribution, which in turn regulates CtrA, a transcriptional regulator of the minB operon. The asymmetrical localization of this protein is probably required for cells to enter a new division cycle. In Brucella melitensis biotype 1 (strain ATCC 23456 / CCUG 17765 / NCTC 10094 / 16M), this protein is Cell-division control histidine kinase PdhS (pdhS).